Reading from the N-terminus, the 202-residue chain is Small ribosomal subunit protein uS4 (202 aa).

Residues 15 to 42 (LGDLPGLTRKAAKRSYPPGQHGQARRKR) form a disordered region. Positions 90 to 152 (NRLDNVCFRL…KCSKQLAEGN (63 aa)) constitute an S4 RNA-binding domain.

This sequence belongs to the universal ribosomal protein uS4 family. In terms of assembly, part of the 30S ribosomal subunit. Contacts protein S5. The interaction surface between S4 and S5 is involved in control of translational fidelity.

Its function is as follows. One of the primary rRNA binding proteins, it binds directly to 16S rRNA where it nucleates assembly of the body of the 30S subunit. With S5 and S12 plays an important role in translational accuracy. The protein is Small ribosomal subunit protein uS4 of Parasynechococcus marenigrum (strain WH8102).